Here is a 545-residue protein sequence, read N- to C-terminus: Putative serine/threonine-protein kinase L673 (545 aa).

The Cyclin N-terminal domain occupies 13 to 125 (RLGLVNWMLN…YKVYYLTIWK (113 aa)). The region spanning 264-543 (IDFQNKLGSG…NCLKKIKESF (280 aa)) is the Protein kinase domain. ATP is bound by residues 270–278 (LGSGTYGSV) and Lys-291. Catalysis depends on Asp-384, which acts as the Proton acceptor.

Belongs to the protein kinase superfamily. Ser/Thr protein kinase family.

It carries out the reaction L-seryl-[protein] + ATP = O-phospho-L-seryl-[protein] + ADP + H(+). It catalyses the reaction L-threonyl-[protein] + ATP = O-phospho-L-threonyl-[protein] + ADP + H(+). The sequence is that of Putative serine/threonine-protein kinase L673 from Acanthamoeba polyphaga (Amoeba).